Reading from the N-terminus, the 776-residue chain is MNKKILQILEYDKVKEQFMNALTTAQGQKELSDLVPLTDKDKIQLLFDEVADFRLLTQENGLLNLGKTNDLTEILRRLELEASLSGKEFVEIKKVIQLGINIQRFFDEAENVETPSLNITLEKLVDLSGLIKKLEIFDNAGSLYDNASLELMHIRASIKSHQSEIRKIMQEMLTKNLSSLSENVITIRNDRQVLPVKAENKNKIAGVVHDMSASGQTLYIEPNAVVSLNNKLNQKRIEERQEITRIYRELAEELKPYSFDIRQNAWLIGHIDFVRAKYLYLTANKASLPALTNDKDIILFAARHPLIDAKMVVANDIKFDKTLNTIVITGPNTGGKTITLKTVGLLTILAQSGLPILAEDGSRIHLFDDIFADIGDEQSIEQSLSTFSSHMTNIVQILAQADENSLVLFDELGAGTDPKEGAALAIAILENLRKRNVKTMASTHYPELKAYGVETQQVINASMEFNIDKMQPTYHLQLGVPGRSNALEISRRLGLPETIISEAGQQISESEHDVNQMIEKLEEKTREVIESSRNIKKIERENQSLHKDLTKVYNQINRERDFELEKAQKEAQEVVKKASLEAQEILKNLNDKAALKPHEIIAARKELEGLAPTIDFSKNKVLKKAKAQRGLKQGAEVNVTSYGQRGKLIRLEKDGRWTVQMGSITTRLSEEEFEVIETPEQIQAKTKNVSKKVTSKVKAQLDLRGMRYEEAELELDNYIDQALLANLIQITIVHGIGTGVIREMVQKKLQKHRHIKSYEYAPINAGGSGATIAILK.

330–337 (GPNTGGKT) is an ATP binding site. Residues 701-776 (LDLRGMRYEE…GSGATIAILK (76 aa)) enclose the Smr domain.

The protein belongs to the DNA mismatch repair MutS family. MutS2 subfamily. As to quaternary structure, homodimer. Binds to stalled ribosomes, contacting rRNA.

In terms of biological role, endonuclease that is involved in the suppression of homologous recombination and thus may have a key role in the control of bacterial genetic diversity. Its function is as follows. Acts as a ribosome collision sensor, splitting the ribosome into its 2 subunits. Detects stalled/collided 70S ribosomes which it binds and splits by an ATP-hydrolysis driven conformational change. Acts upstream of the ribosome quality control system (RQC), a ribosome-associated complex that mediates the extraction of incompletely synthesized nascent chains from stalled ribosomes and their subsequent degradation. Probably generates substrates for RQC. This Lactococcus lactis subsp. cremoris (strain MG1363) protein is Endonuclease MutS2.